Consider the following 150-residue polypeptide: Small ribosomal subunit protein uS13 (150 aa).

This sequence belongs to the universal ribosomal protein uS13 family. In terms of assembly, part of the 30S ribosomal subunit. Forms a loose heterodimer with protein S19. Forms two bridges to the 50S subunit in the 70S ribosome.

In terms of biological role, located at the top of the head of the 30S subunit, it contacts several helices of the 16S rRNA. In the 70S ribosome it contacts the 23S rRNA (bridge B1a) and protein L5 of the 50S subunit (bridge B1b), connecting the 2 subunits; these bridges are implicated in subunit movement. The polypeptide is Small ribosomal subunit protein uS13 (Aeropyrum pernix (strain ATCC 700893 / DSM 11879 / JCM 9820 / NBRC 100138 / K1)).